The chain runs to 52 residues: Conotoxin reg3h (52 aa).

Ala-1 is a signal peptide. The propeptide occupies 2 to 33 (LPLDGDQPADQPAERMQDISPELNPLFHPVKR). 3 disulfides stabilise this stretch: Cys-35-Cys-49, Cys-36-Cys-47, and Cys-41-Cys-50. Pro-38, Pro-48, and Pro-51 each carry 4-hydroxyproline. The residue at position 52 (Asn-52) is an Asparagine amide.

In terms of tissue distribution, expressed by the venom duct.

The protein localises to the secreted. This Conus regius (Crown cone) protein is Conotoxin reg3h.